Consider the following 113-residue polypeptide: Cell cycle protein GpsB (113 aa).

A coiled-coil region spans residues Leu36–Pro68.

It belongs to the GpsB family. Forms polymers through the coiled coil domains. Interacts with PBP1, MreC and EzrA.

It localises to the cytoplasm. Functionally, divisome component that associates with the complex late in its assembly, after the Z-ring is formed, and is dependent on DivIC and PBP2B for its recruitment to the divisome. Together with EzrA, is a key component of the system that regulates PBP1 localization during cell cycle progression. Its main role could be the removal of PBP1 from the cell pole after pole maturation is completed. Also contributes to the recruitment of PBP1 to the division complex. Not essential for septum formation. The sequence is that of Cell cycle protein GpsB from Listeria innocua serovar 6a (strain ATCC BAA-680 / CLIP 11262).